The following is a 545-amino-acid chain: Acetyltransferase BOT5 (545 aa).

The signal sequence occupies residues 1–19; that stretch reads MATIPLFFSLILFLRLYHA. 2 N-linked (GlcNAc...) asparagine glycosylation sites follow: Asn-70 and Asn-198. His-208 acts as the Proton acceptor in catalysis. Asn-346 and Asn-445 each carry an N-linked (GlcNAc...) asparagine glycan. The interval 466–493 is disordered; the sequence is GAGNQKSSSTRKAARHTEPTQAQTQPGR.

The protein belongs to the plant acyltransferase family.

Its pathway is secondary metabolite biosynthesis. Acetyltransferase; part of the gene cluster that mediates the biosynthesis of botrydial. Botrydial is necessary for colonization of plant tissue by the T4 strain. It is a strain-dependent virulence factor since highly aggressive strains like SAS56 or B05 still retain substantial virulence when botrydial synthesis is impaired, since they produce also botcinic acid. The first step of botrydial biosynthesis is performed by the sesquiterpene synthase BOT2 which catalyzes the cyclization of farnesyl diphosphate (FPP) to presilphiperfolan-8-beta-ol (PSP). The cytochrome P450 monooxygenase BOT4 then catalyzes the hydroxylation at C-4 to give a probotryane intermediate. Acetylation of the hydroxyl at C-4 is carried out by the acetyltransferase BOT5, followed by the combined action of the P450 monooxygenases BOT3 and BOT1, to yield finally the glycol, via the regio- and stereospecific hydroxylations at C-10 and C-15 of the probotryane intermediates, respectively. The cleavage of the C10-C15 bond of probotryane skeleton is an intriguing and chemically important reaction, which could be mediated by some of the monooxygenases or by a combination of them. It is possible that either BOT3 or BOT1 would oxidize either the 10- or the 15-hydroxy group to the hydroperoxide derivative, which would then undergo heterolytic fragmentation to give the dialdehyde botrydial. Finally, the dehydrogenase BOT7 might be involved in the conversion of botrydial to dihydrobotrydial. In Botryotinia fuckeliana (Noble rot fungus), this protein is Acetyltransferase BOT5.